The following is a 313-amino-acid chain: D-alanine--D-alanine ligase (313 aa).

The 201-residue stretch at 108–308 (KLVWQQTGVP…YSELVVKVLS (201 aa)) folds into the ATP-grasp domain. 138–193 (VAKLGLPLFVKPASEGSSVAVLKVKTADALPAALAEAATHDKIVIVEKSIEGGGEY) lines the ATP pocket. Asp-262, Glu-275, and Asn-277 together coordinate Mg(2+).

It belongs to the D-alanine--D-alanine ligase family. Mg(2+) is required as a cofactor. Requires Mn(2+) as cofactor.

The protein localises to the cytoplasm. It carries out the reaction 2 D-alanine + ATP = D-alanyl-D-alanine + ADP + phosphate + H(+). It functions in the pathway cell wall biogenesis; peptidoglycan biosynthesis. In terms of biological role, cell wall formation. This Burkholderia multivorans (strain ATCC 17616 / 249) protein is D-alanine--D-alanine ligase.